The chain runs to 696 residues: Junctophilin-2 (696 aa).

Residues 1–674 (MSGGRFDFDD…EVEVEEVPNT (674 aa)) are Cytoplasmic-facing. 6 MORN repeats span residues 14–36 (YCGG…KGQG), 38–59 (YSGS…SGNT), 60–79 (FEGY…TKGR), 82–104 (YKGE…NSGA), 106–128 (YEGT…DGGT), and 129–151 (YQGQ…PYGM). Residues Ser-162 and Ser-165 each carry the phosphoserine modification. Disordered regions lie at residues 164–192 (SSLR…SPPV) and 246–273 (LSSG…AAPF). 2 MORN repeats span residues 285 to 307 (YMGE…SGLR) and 308 to 330 (YEGE…DGHR). The Bipartite nuclear localization signal motif lies at 345-359 (KRRVLPLKSSKVRQK). Positions 439–664 (NSESLLEPPE…RKEVAQAKEA (226 aa)) are disordered. Ser-440, Ser-442, and Ser-462 each carry phosphoserine. The span at 457–471 (ERPRESPQLHERETP) shows a compositional bias: basic and acidic residues. Thr-470 is subject to Phosphothreonine. Positions 474 to 487 (EGGPPSPAGTPPQP) are enriched in pro residues. Position 479 is a phosphoserine (Ser-479). Thr-483 is subject to Phosphothreonine. Positions 488 to 492 (KRPRP) match the Nuclear localization signal motif. Residues Ser-527 and Ser-533 each carry the phosphoserine modification. The span at 573 to 585 (PLEDEQEPEPEPE) shows a compositional bias: acidic residues. Phosphoserine occurs at positions 593, 597, and 613. The segment covering 631 to 644 (AEPKAKARKTEARG) has biased composition (basic and acidic residues). The helical; Anchor for type IV membrane protein transmembrane segment at 675–695 (VLICMVILLNIGLAILFVHLL) threads the bilayer.

The protein belongs to the junctophilin family. Interacts with TRPC3. Interacts with BAG5 and HSPA8; the interaction with HSPA8 is increased in the presence of BAG5. In terms of assembly, interacts with MEF2C. Proteolytically cleaved by calpain in response to cardiac stress. The major cleavage site takes place at the C-terminus and leads to the release of the Junctophilin-2 N-terminal fragment chain (JP2NT). Post-translationally, phosphorylation on Ser-165, probably by PKC, affects RYR1-mediated calcium ion release, interaction with TRPC3, and skeletal muscle myotubule development. As to expression, abundantly expressed in skeletal muscle and heart. Weak expression in stomach and lung.

It is found in the cell membrane. It localises to the sarcoplasmic reticulum membrane. The protein resides in the endoplasmic reticulum membrane. Its subcellular location is the nucleus. Functionally, membrane-binding protein that provides a structural bridge between the plasma membrane and the sarcoplasmic reticulum and is required for normal excitation-contraction coupling in cardiomyocytes. Provides a structural foundation for functional cross-talk between the cell surface and intracellular Ca(2+) release channels by maintaining the 12-15 nm gap between the sarcolemma and the sarcoplasmic reticulum membranes in the cardiac dyads. Necessary for proper intracellular Ca(2+) signaling in cardiac myocytes via its involvement in ryanodine receptor-mediated calcium ion release. Contributes to the construction of skeletal muscle triad junctions. In terms of biological role, transcription repressor required to safeguard against the deleterious effects of cardiac stress. Generated following cleavage of the Junctophilin-2 chain by calpain in response to cardiac stress in cardiomyocytes. Following cleavage and release from the membrane, translocates to the nucleus, binds DNA and represses expression of genes implicated in cell growth and differentiation, hypertrophy, inflammation and fibrosis. Modifies the transcription profile and thereby attenuates pathological remodeling in response to cardiac stress. Probably acts by competing with MEF2 transcription factors and TATA-binding proteins. This Mus musculus (Mouse) protein is Junctophilin-2.